The chain runs to 452 residues: Phosphoglucosamine mutase (452 aa).

Ser108 serves as the catalytic Phosphoserine intermediate. Positions 108, 247, 249, and 251 each coordinate Mg(2+). The residue at position 108 (Ser108) is a Phosphoserine.

It belongs to the phosphohexose mutase family. It depends on Mg(2+) as a cofactor. In terms of processing, activated by phosphorylation.

It carries out the reaction alpha-D-glucosamine 1-phosphate = D-glucosamine 6-phosphate. Functionally, catalyzes the conversion of glucosamine-6-phosphate to glucosamine-1-phosphate. The polypeptide is Phosphoglucosamine mutase (Burkholderia thailandensis (strain ATCC 700388 / DSM 13276 / CCUG 48851 / CIP 106301 / E264)).